The primary structure comprises 158 residues: Crossover junction endodeoxyribonuclease RuvC (158 aa).

Catalysis depends on residues Asp7, Glu66, and Asp139. Asp7, Glu66, and Asp139 together coordinate Mg(2+).

The protein belongs to the RuvC family. Homodimer which binds Holliday junction (HJ) DNA. The HJ becomes 2-fold symmetrical on binding to RuvC with unstacked arms; it has a different conformation from HJ DNA in complex with RuvA. In the full resolvosome a probable DNA-RuvA(4)-RuvB(12)-RuvC(2) complex forms which resolves the HJ. Mg(2+) is required as a cofactor.

It localises to the cytoplasm. The enzyme catalyses Endonucleolytic cleavage at a junction such as a reciprocal single-stranded crossover between two homologous DNA duplexes (Holliday junction).. The RuvA-RuvB-RuvC complex processes Holliday junction (HJ) DNA during genetic recombination and DNA repair. Endonuclease that resolves HJ intermediates. Cleaves cruciform DNA by making single-stranded nicks across the HJ at symmetrical positions within the homologous arms, yielding a 5'-phosphate and a 3'-hydroxyl group; requires a central core of homology in the junction. The consensus cleavage sequence is 5'-(A/T)TT(C/G)-3'. Cleavage occurs on the 3'-side of the TT dinucleotide at the point of strand exchange. HJ branch migration catalyzed by RuvA-RuvB allows RuvC to scan DNA until it finds its consensus sequence, where it cleaves and resolves the cruciform DNA. The polypeptide is Crossover junction endodeoxyribonuclease RuvC (Campylobacter lari (strain RM2100 / D67 / ATCC BAA-1060)).